A 95-amino-acid chain; its full sequence is Fluoride-specific ion channel FluC 1 (95 aa).

Transmembrane regions (helical) follow at residues leucine 23–tryptophan 43, leucine 49–phenylalanine 69, and aspartate 70–glycine 90. 2 residues coordinate Na(+): glycine 56 and threonine 59.

Belongs to the fluoride channel Fluc/FEX (TC 1.A.43) family.

Its subcellular location is the cell membrane. It carries out the reaction fluoride(in) = fluoride(out). With respect to regulation, na(+) is not transported, but it plays an essential structural role and its presence is essential for fluoride channel function. Functionally, fluoride-specific ion channel. Important for reducing fluoride concentration in the cell, thus reducing its toxicity. The polypeptide is Fluoride-specific ion channel FluC 1 (Corynebacterium diphtheriae (strain ATCC 700971 / NCTC 13129 / Biotype gravis)).